The sequence spans 188 residues: Single-stranded DNA-binding protein DdrB (188 aa).

Positions 140–188 (YAVPGGAAGNGQGRPAPQGQPAQARPQATAARPAARPPVQPGQEEETPF) are disordered. Positions 152-173 (GRPAPQGQPAQARPQATAARPA) are enriched in low complexity.

In terms of assembly, homopentamer arranged in a ring-structure; DNA binds between subunits and along the top of the ring. The pentamers self-associate to coat ssDNA in higher-ordered structures; oligomerization facilitates the assembly of extended nucleoprotein complexes. Self-assembly does not however require ssDNA-binding. Interacts with SSB.

Its function is as follows. ssDNA-binding protein that contributes to the ionizing radiation resistance of D.radiodurans. Plays a role in DNA repair and genome reconstitution in a RecA-independent process. Required for recovery from severe genomic fragmentation as a result of exposure to severe levels of ionizing radiation. Binds ssDNA but not dsDNA. Stimulates annealing of complementary ssDNA. Does not complement an ssb disruption. This is Single-stranded DNA-binding protein DdrB (ddrB) from Deinococcus radiodurans (strain ATCC 13939 / DSM 20539 / JCM 16871 / CCUG 27074 / LMG 4051 / NBRC 15346 / NCIMB 9279 / VKM B-1422 / R1).